The following is a 289-amino-acid chain: Agmatinase (289 aa).

The Mn(2+) site is built by His112, Asp135, His137, Asp139, Asp216, and Asp218.

Belongs to the arginase family. Agmatinase subfamily. Requires Mn(2+) as cofactor.

The enzyme catalyses agmatine + H2O = urea + putrescine. It functions in the pathway amine and polyamine biosynthesis; putrescine biosynthesis via agmatine pathway; putrescine from agmatine: step 1/1. In terms of biological role, catalyzes the formation of putrescine from agmatine. The sequence is that of Agmatinase (speB) from Halalkalibacterium halodurans (strain ATCC BAA-125 / DSM 18197 / FERM 7344 / JCM 9153 / C-125) (Bacillus halodurans).